The chain runs to 384 residues: Autophagy-related protein 30 (384 aa).

The segment at 1 to 63 is disordered; it reads MFSRKQVQKR…ASPGQLRPRT (63 aa). Residues 13–27 are compositionally biased toward low complexity; it reads ELSSLHCSNSSNSLN. Positions 45–63 are enriched in polar residues; it reads RGNNRSDNVASPGQLRPRT. Phosphoserine is present on S112. A disordered region spans residues 266-291; sequence VKHDKPSSPLPNYHNTLKQAPSSNSQ. The span at 278 to 291 shows a compositional bias: polar residues; the sequence is YHNTLKQAPSSNSQ.

In terms of assembly, interacts with ATG11, ATG17, ATG37, PEX3 and PEX14. Post-translationally, phosphorylation at Ser-112 is required for micro- and macropexophagy.

It is found in the vacuole lumen. The protein localises to the preautophagosomal structure. The protein resides in the peroxisome membrane. Its function is as follows. Acts as the peroxisome receptor for pexophagy. Required for both micropexophagy and macropexophagy, but not for the cytoplasm to vacuole transport (Cvt) or autophagy pathways. Required for functional micropexophagic apparatus (MIPA) and relocation of ATG11 to the peroxisome-sequestering arms of the vacuole. This is Autophagy-related protein 30 (ATG30) from Komagataella phaffii (strain GS115 / ATCC 20864) (Yeast).